The primary structure comprises 121 residues: MPRIAGVDLPRDKRIAYGLTYIFGIGINTAHKIVADAGVPEDVRVRDLTPDQEDKVRAEVDKYKVEGDLRREVSLNIKNLQEIGSYRGMRHRRGLPVRGQHTKNNARTRKGKAVSIAGKKK.

A disordered region spans residues 89–121 (MRHRRGLPVRGQHTKNNARTRKGKAVSIAGKKK).

This sequence belongs to the universal ribosomal protein uS13 family. Part of the 30S ribosomal subunit. Forms a loose heterodimer with protein S19. Forms two bridges to the 50S subunit in the 70S ribosome.

Its function is as follows. Located at the top of the head of the 30S subunit, it contacts several helices of the 16S rRNA. In the 70S ribosome it contacts the 23S rRNA (bridge B1a) and protein L5 of the 50S subunit (bridge B1b), connecting the 2 subunits; these bridges are implicated in subunit movement. Contacts the tRNAs in the A and P-sites. The chain is Small ribosomal subunit protein uS13 from Levilactobacillus brevis (strain ATCC 367 / BCRC 12310 / CIP 105137 / JCM 1170 / LMG 11437 / NCIMB 947 / NCTC 947) (Lactobacillus brevis).